Here is a 493-residue protein sequence, read N- to C-terminus: Chitobiosyldiphosphodolichol beta-mannosyltransferase (493 aa).

Topologically, residues 1–71 are lumenal; that stretch reads MNRVAVVVLG…PISMSNSFKK (71 aa). The helical transmembrane segment at 72–92 threads the bilayer; sequence IPLISIFMWPLLAICKVLFQI. Residues 93–109 are Cytoplasmic-facing; sequence IQLMYVLLVKVPSPLNT. The segment at residues 110 to 130 is an intramembrane region (helical); sequence ILVQSPPAIPTIFVMQIVCWI. Topologically, residues 131 to 493 are cytoplasmic; sequence RGVHLVIDWH…SSSNSKSKKD (363 aa). A disordered region spans residues 462–493; that stretch reads FIPSSSSSSSSSSSSSSSSSSSSSSNSKSKKD. The segment covering 465 to 493 has biased composition (low complexity); it reads SSSSSSSSSSSSSSSSSSSSSSNSKSKKD.

It belongs to the glycosyltransferase group 1 family. Glycosyltransferase 33 subfamily.

It localises to the endoplasmic reticulum membrane. It catalyses the reaction an N,N'-diacetylchitobiosyl-diphospho-di-trans,poly-cis-dolichol + GDP-alpha-D-mannose = a beta-D-Man-(1-&gt;4)-beta-D-GlcNAc-(1-&gt;4)-alpha-D-GlcNAc-diphospho-di-trans,poly-cis-dolichol + GDP + H(+). Its pathway is protein modification; protein glycosylation. Functionally, participates in the formation of the lipid-linked precursor oligosaccharide for N-glycosylation. Involved in assembling the dolichol-pyrophosphate-GlcNAc(2)-Man(5) intermediate on the cytoplasmic surface of the ER. In Dictyostelium discoideum (Social amoeba), this protein is Chitobiosyldiphosphodolichol beta-mannosyltransferase (alg1).